The following is a 442-amino-acid chain: UDP-N-acetylmuramoylalanine--D-glutamate ligase (442 aa).

ATP is bound at residue 115–121 (GSNGKST).

This sequence belongs to the MurCDEF family.

The protein resides in the cytoplasm. The catalysed reaction is UDP-N-acetyl-alpha-D-muramoyl-L-alanine + D-glutamate + ATP = UDP-N-acetyl-alpha-D-muramoyl-L-alanyl-D-glutamate + ADP + phosphate + H(+). It participates in cell wall biogenesis; peptidoglycan biosynthesis. Cell wall formation. Catalyzes the addition of glutamate to the nucleotide precursor UDP-N-acetylmuramoyl-L-alanine (UMA). The polypeptide is UDP-N-acetylmuramoylalanine--D-glutamate ligase (Vibrio vulnificus (strain YJ016)).